Here is a 297-residue protein sequence, read N- to C-terminus: Protoheme IX farnesyltransferase (297 aa).

A run of 9 helical transmembrane segments spans residues valine 16–proline 36, valine 45–leucine 65, valine 93–isoleucine 113, threonine 114–lysine 134, isoleucine 141–glycine 161, serine 172–phenylalanine 192, valine 223–leucine 243, glycine 244–proline 264, and isoleucine 277–leucine 297.

Belongs to the UbiA prenyltransferase family. Protoheme IX farnesyltransferase subfamily.

It localises to the cell inner membrane. It catalyses the reaction heme b + (2E,6E)-farnesyl diphosphate + H2O = Fe(II)-heme o + diphosphate. The protein operates within porphyrin-containing compound metabolism; heme O biosynthesis; heme O from protoheme: step 1/1. Converts heme B (protoheme IX) to heme O by substitution of the vinyl group on carbon 2 of heme B porphyrin ring with a hydroxyethyl farnesyl side group. This chain is Protoheme IX farnesyltransferase, found in Stenotrophomonas maltophilia (strain R551-3).